The following is a 115-amino-acid chain: Macrophage migration inhibitory factor (115 aa).

Proline 2 serves as the catalytic Proton acceptor; via imino nitrogen. Substrate contacts are provided by lysine 33 and isoleucine 65. At lysine 78 the chain carries N6-acetyllysine; alternate. At lysine 78 the chain carries N6-succinyllysine; alternate. Asparagine 98 provides a ligand contact to substrate.

This sequence belongs to the MIF family. In terms of assembly, homotrimer. Interacts with CD74 and CXCR2 extracellular domain and COPS5. Interacts with the USO1 and BNIPL.

It is found in the secreted. It localises to the cytoplasm. It catalyses the reaction 3-phenylpyruvate = enol-phenylpyruvate. The enzyme catalyses L-dopachrome = 5,6-dihydroxyindole-2-carboxylate. Pro-inflammatory cytokine involved in the innate immune response to bacterial pathogens. The expression of MIF at sites of inflammation suggests a role as mediator in regulating the function of macrophages in host defense. Counteracts the anti-inflammatory activity of glucocorticoids. Has phenylpyruvate tautomerase and dopachrome tautomerase activity (in vitro), but the physiological substrate is not known. It is not clear whether the tautomerase activity has any physiological relevance, and whether it is important for cytokine activity. This Mus musculus (Mouse) protein is Macrophage migration inhibitory factor.